Consider the following 301-residue polypeptide: Acetylglutamate kinase (301 aa).

Substrate is bound by residues 68–69 (GG), R90, and N195.

It belongs to the acetylglutamate kinase family. ArgB subfamily.

Its subcellular location is the cytoplasm. It catalyses the reaction N-acetyl-L-glutamate + ATP = N-acetyl-L-glutamyl 5-phosphate + ADP. It participates in amino-acid biosynthesis; L-arginine biosynthesis; N(2)-acetyl-L-ornithine from L-glutamate: step 2/4. Functionally, catalyzes the ATP-dependent phosphorylation of N-acetyl-L-glutamate. This is Acetylglutamate kinase from Ectopseudomonas mendocina (strain ymp) (Pseudomonas mendocina).